Consider the following 89-residue polypeptide: Small ribosomal subunit protein uS15 (89 aa).

It belongs to the universal ribosomal protein uS15 family. As to quaternary structure, part of the 30S ribosomal subunit. Forms a bridge to the 50S subunit in the 70S ribosome, contacting the 23S rRNA.

Its function is as follows. One of the primary rRNA binding proteins, it binds directly to 16S rRNA where it helps nucleate assembly of the platform of the 30S subunit by binding and bridging several RNA helices of the 16S rRNA. Forms an intersubunit bridge (bridge B4) with the 23S rRNA of the 50S subunit in the ribosome. The protein is Small ribosomal subunit protein uS15 of Desulfotalea psychrophila (strain LSv54 / DSM 12343).